Consider the following 383-residue polypeptide: MAKHLFTSESVSEGHPDKIADQISDAVLDAILAQDPKARVACETYVKTGMVLVGGEVTTSAWVDIEELTRKTVREIGYTHSDMGFDADSCAVLNAIGKQSPDINQGVDRADPKEQGAGDQGLMFGYASNETEILMPAPITYAHALVKRQSEVRKNGTLPWLRPDAKSQVTFAYENNKIVGIDAIVLSTQHSPDIAQADLIEGVMESIIKPVLPAQWLSKDTKYFINPTGRFVIGGPMGDCGLTGRKIIVDTYGGMARHGGGAFSGKDPSKVDRSAAYAARYVAKNIVAAGLADRCELQVSYAIGVAEPTSISIETFGTGKVSEEVLIKLVRQHFDLRPYGLTEMLNLARPIYQATAAYGHFGRNEFPWEATDKAEALRADAGL.

H15 lines the ATP pocket. Residue D17 participates in Mg(2+) binding. E43 contacts K(+). The L-methionine site is built by E56 and Q99. The interval 99–109 (QSPDINQGVDR) is flexible loop. Residues 164-166 (DAK), 230-231 (RF), D239, 245-246 (RK), A262, and K266 contribute to the ATP site. An L-methionine-binding site is contributed by D239. Residue K270 coordinates L-methionine.

The protein belongs to the AdoMet synthase family. As to quaternary structure, homotetramer; dimer of dimers. Mg(2+) is required as a cofactor. It depends on K(+) as a cofactor.

The protein resides in the cytoplasm. The catalysed reaction is L-methionine + ATP + H2O = S-adenosyl-L-methionine + phosphate + diphosphate. Its pathway is amino-acid biosynthesis; S-adenosyl-L-methionine biosynthesis; S-adenosyl-L-methionine from L-methionine: step 1/1. Functionally, catalyzes the formation of S-adenosylmethionine (AdoMet) from methionine and ATP. The overall synthetic reaction is composed of two sequential steps, AdoMet formation and the subsequent tripolyphosphate hydrolysis which occurs prior to release of AdoMet from the enzyme. The sequence is that of S-adenosylmethionine synthase from Shewanella sp. (strain W3-18-1).